Here is a 791-residue protein sequence, read N- to C-terminus: MVVHSLRLQDLIEEIRGAKTQAQEREVIQKECAQIRASFRDGDPLQRHRQLAKLLYVHMLGYPAHFGQMECLKLIASPRFTDKRVGYLGAMLLLDERHDSHLLITNSIKNDLSQGNQPVQGLALCTLSTMGSAEMCRDLAPEVEKLLLQPSPYVRKKAILTAVHMIRKDPELSGIFLPPCTKLLRERHHGIQLGTVTLITELCERNPAALRHFRKVVPQLVQILRTLVTTGYSTEHSISGVSDPFLQVQILRLLRILGRNHEESSETMNDLLAQVATNTDTSRNAGNAVLLETVLTIMAIHSAAGLRVLAVNILGRFLLNNDKNIRYVALTSLLQLVQSDHSAVQRHRSTVVECLQETDASLSRRALELSLALVNSSNVRAMMQELQAFLESCPPDLRADCASGILLAAERFAPSKRWHIDTILHVLTTAGAHVRDDAVANLTQLIGEAEELHTYSVRRLYSALAEDISQQPLVQVAAWCIGEYGDLLLEGNCEETEPFQVEEEDVLALLEKVLQSHMSLPATRGYAITALMKLSTRLRGDNNRIRQVVSIYGSCVDLELQQRAVEYNTLFQKYDHMRAAILEKMPLVERGDPHVKEGGKEKQTEAQPLEVTAPAPTEPQATKLLDLLDLLGDTSEPLSSGHAQHLPPQTPSPGEALIHLLDLPCTPPPPAPIPSVRVFEREGLQLDLSFMRPLETPALLLVTATTTNSSKEDVTHFVCQAAVPKSFQLQLQAPSGNTIPAQGGLPITQVFRILNPNQAPLRLKLRLTYNHSGQPVQEIFEVDNLPVETWQ.

Residues 671-786 (APIPSVRVFE…QEIFEVDNLP (116 aa)) enclose the GAE domain.

The protein belongs to the adaptor complexes large subunit family. In terms of assembly, may interact with AP1S1/Sigma1A-adaptin and AP1S2/Sigma1B-adaptin. Probably does not interact with APB1. Interacts (via GAE domain) with RABEP1, NECAP1, CLINT1 and AFTPH/aftiphilin. Interacts with HBV major surface antigen L. Interacts with HBV core protein C in a ubiquitin-dependent manner. Binds ubiquitin. In terms of tissue distribution, widely expressed.

The protein localises to the golgi apparatus membrane. It localises to the cytoplasmic vesicle membrane. Its subcellular location is the endosome membrane. Functionally, may function in protein sorting in late endosomes or multivesucular bodies (MVBs). Involved in MVB-assisted maturation of hepatitis B virus (HBV). In Mus musculus (Mouse), this protein is AP-1 complex subunit gamma-like 2 (Ap1g2).